The sequence spans 207 residues: Outer-membrane lipoprotein carrier protein (207 aa).

An N-terminal signal peptide occupies residues 1-21 (MRAIRMLLVSALAMGAVSAHA).

This sequence belongs to the LolA family. Monomer.

It is found in the periplasm. Functionally, participates in the translocation of lipoproteins from the inner membrane to the outer membrane. Only forms a complex with a lipoprotein if the residue after the N-terminal Cys is not an aspartate (The Asp acts as a targeting signal to indicate that the lipoprotein should stay in the inner membrane). The chain is Outer-membrane lipoprotein carrier protein from Pseudomonas entomophila (strain L48).